An 82-amino-acid chain; its full sequence is Small ribosomal subunit protein bS16c (82 aa).

The protein belongs to the bacterial ribosomal protein bS16 family.

It localises to the plastid. It is found in the chloroplast. In Porphyra purpurea (Red seaweed), this protein is Small ribosomal subunit protein bS16c.